The primary structure comprises 734 residues: Homoaconitase, mitochondrial (734 aa).

The N-terminal 25 residues, M1–L25, are a transit peptide targeting the mitochondrion. The [4Fe-4S] cluster site is built by C367, C427, and C430.

It belongs to the aconitase/IPM isomerase family. The cofactor is [4Fe-4S] cluster.

The protein resides in the mitochondrion. It catalyses the reaction (2R,3S)-homoisocitrate = cis-homoaconitate + H2O. Its pathway is amino-acid biosynthesis; L-lysine biosynthesis via AAA pathway; L-alpha-aminoadipate from 2-oxoglutarate: step 3/5. Its function is as follows. Catalyzes the reversible hydration of cis-homoaconitate to (2R,3S)-homoisocitrate, a step in the alpha-aminoadipate pathway for lysine biosynthesis. The polypeptide is Homoaconitase, mitochondrial (LYS4) (Mycosarcoma maydis (Corn smut fungus)).